Here is a 372-residue protein sequence, read N- to C-terminus: Probable O-methyltransferase 2 (372 aa).

Positions 216, 259, and 273 each coordinate S-adenosyl-L-methionine. His-277 serves as the catalytic Proton acceptor.

Belongs to the class I-like SAM-binding methyltransferase superfamily. Cation-independent O-methyltransferase family. COMT subfamily. In terms of assembly, homodimer. Expressed predominantly in root hairs.

In terms of biological role, O-methyltransferase of unknown substrate specificity. Not active on resorcinol, orcinol, guaiacol, eugenol, ferulic acid, p-coumaric acid, catechol, caffeic acid or monomethyl ethers of resorcinol or orcinol. This Sorghum bicolor (Sorghum) protein is Probable O-methyltransferase 2 (OMT2).